A 233-amino-acid polypeptide reads, in one-letter code: Large ribosomal subunit protein uL1 (233 aa).

Belongs to the universal ribosomal protein uL1 family. Part of the 50S ribosomal subunit.

Binds directly to 23S rRNA. The L1 stalk is quite mobile in the ribosome, and is involved in E site tRNA release. In terms of biological role, protein L1 is also a translational repressor protein, it controls the translation of the L11 operon by binding to its mRNA. The protein is Large ribosomal subunit protein uL1 of Shewanella frigidimarina (strain NCIMB 400).